A 128-amino-acid chain; its full sequence is Adrenodoxin (128 aa).

S3 is modified (phosphoserine). K6 bears the N6-acetyllysine; alternate mark. K6 is subject to N6-succinyllysine; alternate. Positions 7 to 111 (VTVNFINRDG…NMTVRVPDAV (105 aa)) constitute a 2Fe-2S ferredoxin-type domain. [2Fe-2S] cluster contacts are provided by C46, C52, C55, and C92. K98 carries the N6-succinyllysine modification. S117 carries the post-translational modification Phosphoserine.

It belongs to the adrenodoxin/putidaredoxin family. As to quaternary structure, interacts with CYP11A1. The cofactor is [2Fe-2S] cluster.

It is found in the mitochondrion matrix. In terms of biological role, essential for the synthesis of various steroid hormones. Participates in the reduction of mitochondrial cytochrome P450 for steroidogenesis. Transfers electrons from adrenodoxin reductase to CYP11A1, a cytochrome P450 that catalyzes cholesterol side-chain cleavage. Does not form a ternary complex with adrenodoxin reductase and CYP11A1 but shuttles between the two enzymes to transfer electrons. The chain is Adrenodoxin (FDX1) from Ovis aries (Sheep).